The sequence spans 290 residues: Xyloglucan endotransglucosylase/hydrolase protein 9 (290 aa).

An N-terminal signal peptide occupies residues 1–26 (MVGMDLFKCVMMIMVLVVSCGEAVSG). The 189-residue stretch at 27–215 (AKFDELYRSS…WSHAPFVASY (189 aa)) folds into the GH16 domain. Asn55 is a glycosylation site (N-linked (GlcNAc...) asparagine). The active-site Nucleophile is the Glu101. Catalysis depends on Glu105, which acts as the Proton donor. Glu105 is a xyloglucan binding site. A glycan (N-linked (GlcNAc...) asparagine) is linked at Asn109. Residues 118–120 (QTN), 128–130 (NRE), 194–195 (DW), and Gly199 each bind xyloglucan. Disulfide bonds link Cys223–Cys234 and Cys271–Cys284. A xyloglucan-binding site is contributed by Arg276.

Belongs to the glycosyl hydrolase 16 family. XTH group 1 subfamily. In terms of processing, contains at least one intrachain disulfide bond essential for its enzymatic activity. In terms of tissue distribution, highly expressed in shoot apices. In the vegetative and reproductive phases, it accumulates in the shoot apex region, where cell division is most active. In the reproductive phase, it is also expressed in flower buds, flower stalks and internodes bearing flowers.

It localises to the secreted. It is found in the cell wall. The protein resides in the extracellular space. The protein localises to the apoplast. It catalyses the reaction breaks a beta-(1-&gt;4) bond in the backbone of a xyloglucan and transfers the xyloglucanyl segment on to O-4 of the non-reducing terminal glucose residue of an acceptor, which can be a xyloglucan or an oligosaccharide of xyloglucan.. In terms of biological role, catalyzes xyloglucan endohydrolysis (XEH) and/or endotransglycosylation (XET). Cleaves and religates xyloglucan polymers, an essential constituent of the primary cell wall, and thereby participates in cell wall construction of growing tissues. Involved in internodal cell elongation. The chain is Xyloglucan endotransglucosylase/hydrolase protein 9 (XTH9) from Arabidopsis thaliana (Mouse-ear cress).